The sequence spans 227 residues: Cytochrome c oxidase subunit 2 (227 aa).

Topologically, residues 1–14 (MAYPLQMGLQDATS) are mitochondrial intermembrane. The helical transmembrane segment at 15–45 (PIMEELLHFHDHTLMIVFLISSLVLYIISLM) threads the bilayer. The Mitochondrial matrix segment spans residues 46 to 59 (LTTKLTHTSTMDAQ). The chain crosses the membrane as a helical span at residues 60-87 (EVETVWTILPAIILILIALPSLRILYMM). The Mitochondrial intermembrane segment spans residues 88–227 (DEINNPSLTV…HFEKWSTSML (140 aa)). The Cu cation site is built by histidine 161, cysteine 196, glutamate 198, cysteine 200, histidine 204, and methionine 207. Position 198 (glutamate 198) interacts with Mg(2+).

Belongs to the cytochrome c oxidase subunit 2 family. As to quaternary structure, component of the cytochrome c oxidase (complex IV, CIV), a multisubunit enzyme composed of 14 subunits. The complex is composed of a catalytic core of 3 subunits MT-CO1, MT-CO2 and MT-CO3, encoded in the mitochondrial DNA, and 11 supernumerary subunits COX4I, COX5A, COX5B, COX6A, COX6B, COX6C, COX7A, COX7B, COX7C, COX8 and NDUFA4, which are encoded in the nuclear genome. The complex exists as a monomer or a dimer and forms supercomplexes (SCs) in the inner mitochondrial membrane with NADH-ubiquinone oxidoreductase (complex I, CI) and ubiquinol-cytochrome c oxidoreductase (cytochrome b-c1 complex, complex III, CIII), resulting in different assemblies (supercomplex SCI(1)III(2)IV(1) and megacomplex MCI(2)III(2)IV(2)). Found in a complex with TMEM177, COA6, COX18, COX20, SCO1 and SCO2. Interacts with TMEM177 in a COX20-dependent manner. Interacts with COX20. Interacts with COX16. The cofactor is Cu cation.

The protein resides in the mitochondrion inner membrane. The catalysed reaction is 4 Fe(II)-[cytochrome c] + O2 + 8 H(+)(in) = 4 Fe(III)-[cytochrome c] + 2 H2O + 4 H(+)(out). Component of the cytochrome c oxidase, the last enzyme in the mitochondrial electron transport chain which drives oxidative phosphorylation. The respiratory chain contains 3 multisubunit complexes succinate dehydrogenase (complex II, CII), ubiquinol-cytochrome c oxidoreductase (cytochrome b-c1 complex, complex III, CIII) and cytochrome c oxidase (complex IV, CIV), that cooperate to transfer electrons derived from NADH and succinate to molecular oxygen, creating an electrochemical gradient over the inner membrane that drives transmembrane transport and the ATP synthase. Cytochrome c oxidase is the component of the respiratory chain that catalyzes the reduction of oxygen to water. Electrons originating from reduced cytochrome c in the intermembrane space (IMS) are transferred via the dinuclear copper A center (CU(A)) of subunit 2 and heme A of subunit 1 to the active site in subunit 1, a binuclear center (BNC) formed by heme A3 and copper B (CU(B)). The BNC reduces molecular oxygen to 2 water molecules using 4 electrons from cytochrome c in the IMS and 4 protons from the mitochondrial matrix. This chain is Cytochrome c oxidase subunit 2 (MT-CO2), found in Halichoerus grypus (Gray seal).